The chain runs to 356 residues: Heparan sulfate 2-O-sulfotransferase 1 (356 aa).

The Cytoplasmic segment spans residues 1-11; that stretch reads MGLLRIMLPPK. The chain crosses the membrane as a helical; Signal-anchor for type II membrane protein span at residues 12-28; the sequence is LQLLAVLVFGVAVLFLE. Residues 24–51 are a coiled coil; sequence VLFLENQIQKLEESRGKLERAIARHEVR. The Lumenal segment spans residues 29–356; sequence NQIQKLEESR…FYEKIYPKSN (328 aa). Adenosine 3',5'-bisphosphate is bound by residues lysine 83, threonine 84, alanine 85, serine 86, threonine 87, and serine 88. 2 N-linked (GlcNAc...) asparagine glycosylation sites follow: asparagine 108 and asparagine 127. Catalysis depends on residues histidine 140 and histidine 142. The adenosine 3',5'-bisphosphate site is built by arginine 164 and serine 172. Cystine bridges form between cysteine 201–cysteine 209 and cysteine 222–cysteine 228. Adenosine 3',5'-bisphosphate-binding residues include tyrosine 279, serine 285, threonine 290, and lysine 293.

This sequence belongs to the sulfotransferase 3 family. As to quaternary structure, homotrimer. As to expression, expressed in heart, limb, head and trunk. At stages 20 and 24, it is expressed in the most regions of the first and second pharyngeal arche. In both wing and leg buds, it is detected at the overlying ectoderm and mesenchyme throughout stages 21, 23 and 24.

The protein localises to the golgi apparatus membrane. Its function is as follows. Catalyzes the transfer of a sulfo group from 3'-phospho-5'-adenylyl sulfate (PAPS) to the 2-OH position of iduronic acid (IdoA) or glucuronic acid (GlcA) within the heparan sulfate (HS) chain and participates in HS biosynthesis. In Gallus gallus (Chicken), this protein is Heparan sulfate 2-O-sulfotransferase 1.